The chain runs to 150 residues: Globin-2 A chain (150 aa).

The residue at position 2 (Val-2) is a Blocked amino end (Val). The region spanning Cys-10 to Leu-150 is the Globin domain. His-102 provides a ligand contact to heme b.

The protein belongs to the globin family. Heterotetramer of two alpha chains and two beta chains.

This is Globin-2 A chain from Anadara inaequivalvis (Inequivalve ark).